Reading from the N-terminus, the 420-residue chain is Protein TabA (420 aa).

The residue at position 57 (lysine 57) is an N6-(pyridoxal phosphate)lysine.

It belongs to the Orn/Lys/Arg decarboxylase class-II family. Requires pyridoxal 5'-phosphate as cofactor.

Involved in tabtoxin production and pathogenicity. The polypeptide is Protein TabA (tabA) (Pseudomonas amygdali pv. tabaci (Pseudomonas syringae pv. tabaci)).